We begin with the raw amino-acid sequence, 257 residues long: Type III pantothenate kinase (257 aa).

5–12 (DIGNTNIK) is a binding site for ATP. Position 107-110 (107-110 (GSDR)) interacts with substrate. Catalysis depends on Asp-109, which acts as the Proton acceptor. Residue Thr-133 coordinates ATP.

It belongs to the type III pantothenate kinase family. Homodimer. Requires NH4(+) as cofactor. It depends on K(+) as a cofactor.

The protein localises to the cytoplasm. It catalyses the reaction (R)-pantothenate + ATP = (R)-4'-phosphopantothenate + ADP + H(+). It functions in the pathway cofactor biosynthesis; coenzyme A biosynthesis; CoA from (R)-pantothenate: step 1/5. Functionally, catalyzes the phosphorylation of pantothenate (Pan), the first step in CoA biosynthesis. The polypeptide is Type III pantothenate kinase (Ehrlichia ruminantium (strain Welgevonden)).